Consider the following 146-residue polypeptide: MYPAHLLVLLAVCVSLLGAASIPPLPLNLVQFSYVITCANHNRRSSLDYADYGCYCGAGGSGTPVDELDRCCKIHDDCYGEAEKQGCYPKMLIYDYDCGSNGPYCKNVTKKCNRKVCDCDVAAAKCFARNAYNNANYNIDTKKRCK.

Residues 1–19 (MYPAHLLVLLAVCVSLLGA) form the signal peptide. The propeptide occupies 20–27 (ASIPPLPL). Disulfide bonds link cysteine 38-cysteine 98, cysteine 54-cysteine 145, cysteine 56-cysteine 72, cysteine 71-cysteine 126, cysteine 78-cysteine 119, cysteine 87-cysteine 112, and cysteine 105-cysteine 117. The Ca(2+) site is built by tyrosine 55, glycine 57, and glycine 59. Histidine 75 is a catalytic residue. Ca(2+) is bound at residue aspartate 76. Residue aspartate 120 is part of the active site.

Belongs to the phospholipase A2 family. Group I subfamily. D49 sub-subfamily. It depends on Ca(2+) as a cofactor. Expressed by the venom gland.

The protein localises to the secreted. The catalysed reaction is a 1,2-diacyl-sn-glycero-3-phosphocholine + H2O = a 1-acyl-sn-glycero-3-phosphocholine + a fatty acid + H(+). Its function is as follows. Snake venom phospholipase A2 (PLA2) that inhibits neuromuscular transmission by blocking acetylcholine release from the nerve termini. PLA2 catalyzes the calcium-dependent hydrolysis of the 2-acyl groups in 3-sn-phosphoglycerides. The protein is Basic phospholipase A2 73 of Hydrophis hardwickii (Hardwick's spine-bellied seasnake).